The sequence spans 97 residues: HssA/B-like protein 47 (97 aa).

Positions 1 to 33 (MTLFSSISSISNPMTSSKSSIASFGSGTSMSSN) are disordered.

This sequence belongs to the hssA/B family.

In Dictyostelium discoideum (Social amoeba), this protein is HssA/B-like protein 47 (hssl47).